Reading from the N-terminus, the 531-residue chain is Putative heme-binding protein HQ_1094A (531 aa).

Residue His-177 participates in heme binding. The interval 269–340 (AHGEAHGHAH…STNTNTQDSE (72 aa)) is disordered. The segment covering 271-281 (GEAHGHAHGDS) has biased composition (basic and acidic residues). Gly residues predominate over residues 284–306 (GSGGGGGSSHGQSPGGASAGGSA). Residues 308-317 (GTEDADHSDS) show a composition bias toward basic and acidic residues. Positions 318–338 (RSTTSADTTQSDTSTNTNTQD) are enriched in low complexity. The ABM domain occupies 441 to 529 (GTMGMFYTVK…VLSERPRHVF (89 aa)).

It in the N-terminal section; belongs to the ChdC family.

The chain is Putative heme-binding protein HQ_1094A from Haloquadratum walsbyi (strain DSM 16790 / HBSQ001).